Consider the following 660-residue polypeptide: DNA mismatch repair protein MutL (660 aa).

The protein belongs to the DNA mismatch repair MutL/HexB family.

In terms of biological role, this protein is involved in the repair of mismatches in DNA. It is required for dam-dependent methyl-directed DNA mismatch repair. May act as a 'molecular matchmaker', a protein that promotes the formation of a stable complex between two or more DNA-binding proteins in an ATP-dependent manner without itself being part of a final effector complex. The sequence is that of DNA mismatch repair protein MutL from Streptococcus pyogenes serotype M3 (strain ATCC BAA-595 / MGAS315).